The following is a 146-amino-acid chain: Large ribosomal subunit protein bL21 (146 aa).

Residues 103–146 (DGKSPTIGPRPKKEKAVEPVEGASDDKPRRAAKKTAAKTAEDAD) are disordered. Residues 116-131 (EKAVEPVEGASDDKPR) show a composition bias toward basic and acidic residues.

This sequence belongs to the bacterial ribosomal protein bL21 family. Part of the 50S ribosomal subunit. Contacts protein L20.

Its function is as follows. This protein binds to 23S rRNA in the presence of protein L20. The polypeptide is Large ribosomal subunit protein bL21 (Nitrobacter winogradskyi (strain ATCC 25391 / DSM 10237 / CIP 104748 / NCIMB 11846 / Nb-255)).